Consider the following 179-residue polypeptide: ATP synthase subunit delta (179 aa).

It belongs to the ATPase delta chain family. As to quaternary structure, F-type ATPases have 2 components, F(1) - the catalytic core - and F(0) - the membrane proton channel. F(1) has five subunits: alpha(3), beta(3), gamma(1), delta(1), epsilon(1). F(0) has three main subunits: a(1), b(2) and c(10-14). The alpha and beta chains form an alternating ring which encloses part of the gamma chain. F(1) is attached to F(0) by a central stalk formed by the gamma and epsilon chains, while a peripheral stalk is formed by the delta and b chains.

Its subcellular location is the cell inner membrane. Its function is as follows. F(1)F(0) ATP synthase produces ATP from ADP in the presence of a proton or sodium gradient. F-type ATPases consist of two structural domains, F(1) containing the extramembraneous catalytic core and F(0) containing the membrane proton channel, linked together by a central stalk and a peripheral stalk. During catalysis, ATP synthesis in the catalytic domain of F(1) is coupled via a rotary mechanism of the central stalk subunits to proton translocation. Functionally, this protein is part of the stalk that links CF(0) to CF(1). It either transmits conformational changes from CF(0) to CF(1) or is implicated in proton conduction. This chain is ATP synthase subunit delta, found in Alkalilimnicola ehrlichii (strain ATCC BAA-1101 / DSM 17681 / MLHE-1).